We begin with the raw amino-acid sequence, 246 residues long: tRNA (guanine-N(1)-)-methyltransferase (246 aa).

S-adenosyl-L-methionine is bound by residues glycine 117 and 137–142 (IGDYVL).

Belongs to the RNA methyltransferase TrmD family. In terms of assembly, homodimer.

The protein resides in the cytoplasm. The enzyme catalyses guanosine(37) in tRNA + S-adenosyl-L-methionine = N(1)-methylguanosine(37) in tRNA + S-adenosyl-L-homocysteine + H(+). Its function is as follows. Specifically methylates guanosine-37 in various tRNAs. The chain is tRNA (guanine-N(1)-)-methyltransferase from Acinetobacter baumannii (strain SDF).